A 372-amino-acid chain; its full sequence is Caytaxin (372 aa).

The interval 1-58 is disordered; that stretch reads MGTTEATLRMENVDVRDEWQDEDLPRPLPEDTGVERLGGAVEDSSSPPSTLNLSGAHR. Positions 11 to 29 are enriched in basic and acidic residues; the sequence is ENVDVRDEWQDEDLPRPLP. A compositionally biased stretch (polar residues) spans 43–53; the sequence is DSSSPPSTLNL. Phosphoserine is present on Ser-54. The interval 115–120 is required for interaction with KLC1; that stretch reads ELEWED. Residues 171-328 enclose the CRAL-TRIO domain; the sequence is IRPYMKVVTH…CVLQYEEQRL (158 aa). Residues 190-372 are mediates interaction with GLS; it reads AIIVFAACFL…ATEDQETSMS (183 aa). The segment at 329–372 is disordered; the sequence is RAKRESTRPPQPEFLLPRSEEKPETVEEEDRAAEATEDQETSMS. A compositionally biased stretch (acidic residues) spans 354–372; it reads VEEEDRAAEATEDQETSMS.

In terms of assembly, interacts with KLC1; may link mitochondria to KLC1 and regulate mitochondria localization into neuron projections. Interacts with GLS; the interaction is direct and may control GLS localization, negatively regulating its activity. Interacts with PIN1 (via WW domain); upon NGF stimulation. The interaction with PIN1 and GLS is competitive. In terms of processing, cleaved by CASP3 and CASP7. The potential C-terminal product released by CASP3 cleavage may inhibit the ERK signaling pathway through MAP2K2. May be ubiquitinated by STUB1. Neuronal tissues specific. Strongly expressed in brain. Expressed in virtually all parts of the adult brain, including cortex, cerebellum and olfactory bulbs. Enriched in hippocampus, cerebellar cortex, deep cerebellar nuclei, and pontine nuclei (at protein level).

It localises to the cell projection. The protein resides in the axon. The protein localises to the dendrite. Its subcellular location is the presynapse. It is found in the mitochondrion. It localises to the growth cone. The protein resides in the cytoplasm. Functions in the development of neural tissues, particularly the postnatal maturation of the cerebellar cortex. May play a role in neurotransmission through regulation of glutaminase/GLS, an enzyme responsible for the production in neurons of the glutamate neurotransmitter. Alternatively, may regulate the localization of mitochondria within axons and dendrites. In Mus musculus (Mouse), this protein is Caytaxin (Atcay).